The sequence spans 633 residues: Glutamyl-tRNA(Gln) amidotransferase subunit E (633 aa).

Residues 414 to 437 (ALPDGNTEYMRPLPGKARMYPETD) form a disordered region.

This sequence belongs to the GatB/GatE family. GatE subfamily. In terms of assembly, heterodimer of GatD and GatE.

The enzyme catalyses L-glutamyl-tRNA(Gln) + L-glutamine + ATP + H2O = L-glutaminyl-tRNA(Gln) + L-glutamate + ADP + phosphate + H(+). Its function is as follows. Allows the formation of correctly charged Gln-tRNA(Gln) through the transamidation of misacylated Glu-tRNA(Gln) in organisms which lack glutaminyl-tRNA synthetase. The reaction takes place in the presence of glutamine and ATP through an activated gamma-phospho-Glu-tRNA(Gln). The GatDE system is specific for glutamate and does not act on aspartate. The sequence is that of Glutamyl-tRNA(Gln) amidotransferase subunit E from Pyrococcus abyssi (strain GE5 / Orsay).